The chain runs to 514 residues: Serine--tRNA ligase, cytoplasmic (514 aa).

At Met-1 the chain carries N-acetylmethionine. Residues 9–61 (RVDKGGDPALIRETQEKRFKDPGLVDQLVKADSEWRRCRFRADNLNKLKNLCS) form an interaction with tRNA region. At Ser-241 the chain carries Phosphoserine. L-serine-binding residues include Thr-271 and Arg-302. Residues 302–304 (RQE) and 318–321 (VHQF) contribute to the ATP site. At Lys-323 the chain carries N6-acetyllysine. Glu-325 is a binding site for L-serine. An ATP-binding site is contributed by 391–394 (ELVS). Asn-427 lines the L-serine pocket. Positions 473–514 (PAPIEQEPSKKQKKQHEGSKKKAAARDVTLENRLQNMEVTDA) are disordered. Residues 479-502 (EPSKKQKKQHEGSKKKAAARDVTL) are compositionally biased toward basic and acidic residues. The Nuclear localization signal motif lies at 482 to 494 (KKQKKQHEGSKKK). The segment covering 504–514 (NRLQNMEVTDA) has biased composition (polar residues).

This sequence belongs to the class-II aminoacyl-tRNA synthetase family. Type-1 seryl-tRNA synthetase subfamily. In terms of assembly, homodimer. The tRNA molecule may bind across the dimer. Interacts with SIRT2. Interacts with METTL6; interaction is required for the tRNA N(3)-methylcytidine methyltransferase activity of METTL6. In terms of tissue distribution, brain.

It is found in the cytoplasm. The protein resides in the nucleus. The catalysed reaction is tRNA(Ser) + L-serine + ATP = L-seryl-tRNA(Ser) + AMP + diphosphate + H(+). It carries out the reaction tRNA(Sec) + L-serine + ATP = L-seryl-tRNA(Sec) + AMP + diphosphate + H(+). It functions in the pathway aminoacyl-tRNA biosynthesis; selenocysteinyl-tRNA(Sec) biosynthesis; L-seryl-tRNA(Sec) from L-serine and tRNA(Sec): step 1/1. Its function is as follows. Catalyzes the attachment of serine to tRNA(Ser) in a two-step reaction: serine is first activated by ATP to form Ser-AMP and then transferred to the acceptor end of tRNA(Ser). Is probably also able to aminoacylate tRNA(Sec) with serine, to form the misacylated tRNA L-seryl-tRNA(Sec), which will be further converted into selenocysteinyl-tRNA(Sec). In the nucleus, binds to the VEGFA core promoter and prevents MYC binding and transcriptional activation by MYC. Recruits SIRT2 to the VEGFA promoter, promoting deacetylation of histone H4 at 'Lys-16' (H4K16). Thereby, inhibits the production of VEGFA and sprouting angiogenesis mediated by VEGFA. This chain is Serine--tRNA ligase, cytoplasmic, found in Homo sapiens (Human).